The primary structure comprises 328 residues: NADH-quinone oxidoreductase subunit H 2 (328 aa).

8 consecutive transmembrane segments (helical) span residues 3–23 (LIVA…ILLL), 77–97 (FLFK…FAAI), 119–139 (VALL…IFGG), 165–185 (MGFA…LDIV), 191–211 (VWNV…GLAE), 250–270 (MVLV…GVLI), 272–292 (LPPL…FMWF), and 307–327 (IGWK…GVVF).

It belongs to the complex I subunit 1 family. NDH-1 is composed of 14 different subunits. Subunits NuoA, H, J, K, L, M, N constitute the membrane sector of the complex.

It is found in the cell inner membrane. The catalysed reaction is a quinone + NADH + 5 H(+)(in) = a quinol + NAD(+) + 4 H(+)(out). Functionally, NDH-1 shuttles electrons from NADH, via FMN and iron-sulfur (Fe-S) centers, to quinones in the respiratory chain. The immediate electron acceptor for the enzyme in this species is believed to be ubiquinone. Couples the redox reaction to proton translocation (for every two electrons transferred, four hydrogen ions are translocated across the cytoplasmic membrane), and thus conserves the redox energy in a proton gradient. This subunit may bind ubiquinone. This is NADH-quinone oxidoreductase subunit H 2 from Rhizobium meliloti (strain 1021) (Ensifer meliloti).